A 983-amino-acid polypeptide reads, in one-letter code: Probable beta-galactosidase C (983 aa).

An N-terminal signal peptide occupies residues 1 to 23 (MRIFSFLFLLLLGILTGQGLVSG). Positions 82, 127, 128, 129, and 187 each coordinate substrate. Catalysis depends on Glu-188, which acts as the Proton donor. An N-linked (GlcNAc...) asparagine glycan is attached at Asn-197. Tyr-251 is a binding site for substrate. Cysteines 257 and 304 form a disulfide. The N-linked (GlcNAc...) asparagine glycan is linked to Asn-276. Glu-287 serves as the catalytic Nucleophile. Tyr-353 lines the substrate pocket. 10 N-linked (GlcNAc...) asparagine glycosylation sites follow: Asn-391, Asn-434, Asn-466, Asn-516, Asn-601, Asn-676, Asn-714, Asn-719, Asn-758, and Asn-804.

Belongs to the glycosyl hydrolase 35 family.

The protein localises to the secreted. The catalysed reaction is Hydrolysis of terminal non-reducing beta-D-galactose residues in beta-D-galactosides.. Its function is as follows. Cleaves beta-linked terminal galactosyl residues from gangliosides, glycoproteins, and glycosaminoglycans. The chain is Probable beta-galactosidase C (lacC) from Aspergillus fumigatus (strain CBS 144.89 / FGSC A1163 / CEA10) (Neosartorya fumigata).